The following is a 312-amino-acid chain: uncharacterized protein (312 aa).

The Extracellular segment spans residues 1–14; it reads MSIVETCISFVSTN. The chain crosses the membrane as a helical span at residues 15-35; sequence PFYPFCTGLLLNCVVTPLYFW. At 36 to 41 the chain is on the cytoplasmic side; the sequence is KTQNGR. The helical transmembrane segment at 42–62 threads the bilayer; the sequence is IVVVSLLQFVVLYATAFISIG. Residues 63 to 179 lie on the Extracellular side of the membrane; sequence TDKSLYRNKW…LEYDQDTATE (117 aa). An FAD-binding FR-type domain is found at 70-173; it reads NKWVALPLSK…KGPLGELEYD (104 aa). The helical transmembrane segment at 180 to 200 threads the bilayer; sequence LGIIAGGSGITPVLQVLQEII. The Cytoplasmic segment spans residues 201 to 312; it reads PSPEDLTHIS…GNGTDKVFVF (112 aa).

The protein belongs to the flavoprotein pyridine nucleotide cytochrome reductase family. It depends on FAD as a cofactor.

Its subcellular location is the membrane. This is an uncharacterized protein from Saccharomyces cerevisiae (strain ATCC 204508 / S288c) (Baker's yeast).